A 610-amino-acid chain; its full sequence is MGLKAAQKTLFPLRSIDDVVRLFAAELGREEPDLVLLSLVLGFVEHFLAVNRVIPTNVPELTFQPSPAPDPPGGLTYFPVADLSIIAALYARFTAQIRGAVDLSLYPREGGVSSRELVKKVSDVIWNSLSRSYFKDRAHIQSLFSFITGTKLDSSGVAFAVVGACQALGLRDVHLALSEDHAWVVFGPNGEQTAEVTWHGKGNEDRRGQTVNAGVAERSWLYLKGSYMRCDRKMEVAFMVCAINPSIDLHTDSLELLQLQQKLLWLLYDLGHLERYPMALGNLADLEELEPTPGRPDPLTLYHKGIASAKTYYRDEHIYPYMYLAGYHCRNRNVREALQAWADTATVIQDYNYCREDEEIYKEFFEVANDVIPNLLKEAASLLEAGEERPGEQSQGTQSQGSALQDPECFAHLLRFYDGICKWEEGSPTPVLHVGWATFLVQSLGRFEGQVRQKVRIVSREAEAAEAEEPWGEEAREGRRRGPRRESKPEEPPPPKKPALDKGLGTGQGAVSGPPRKPPGTVAGTARGPEGGSTAQVPAPTASPPPEGPVLTFQSEKMKGMKELLVATKINSSAIKLQLTAQSQVQMKKQKVSTPSDYTLSFLKRQRKGL.

Residues 214-390 (GVAERSWLYL…SLLEAGEERP (177 aa)) form an interaction with FANCD2 region. A disordered region spans residues 460–552 (REAEAAEAEE…SPPPEGPVLT (93 aa)). Over residues 484-500 (RRESKPEEPPPPKKPAL) the composition is skewed to basic and acidic residues. 2 positions are modified to phosphoserine: S487 and S543. T594 carries the post-translational modification Phosphothreonine.

In terms of assembly, component of the MLL-HCF complex, at least composed of KMT2A/MLL1, MEN1, ASH2L, RBBP5, DPY30, WDR5, HCFC1 and HCFC2. Component of the menin-associated histone methyltransferase complex, at least composed of KMT2B/MLL4, MEN1, ASH2L, RBBP5, DPY30 and WDR5. Interacts with POLR2B. Interacts with POLR2A phosphorylated at 'Ser-5', but not with the unphosphorylated, nor 'Ser-2' phosphorylated POLR2A forms. Interacts with FANCD2 and DBF4. Interacts with JUND (via MBM motif); inhibits the interaction of JUND with MAPK10 and the phosphorylation of JUND by MAP kinases MAPK8 and MAPK10. Interacts with SMAD3, but not with SMAD2, nor SMAD4. Directly interacts with NFKB1, NFKB2 and RELA. Interacts with KMT2A (via MBM motif). The KMT2A-MEN1 complex interacts with PSIP1 with a greater affinity as MEN1 enhances interaction of KMT2A with PSIP1. Interacts with the fusion protein KMT2A-MLLT3. As to expression, ubiquitous.

Its subcellular location is the nucleus. In terms of biological role, essential component of a MLL/SET1 histone methyltransferase (HMT) complex, a complex that specifically methylates 'Lys-4' of histone H3 (H3K4). Functions as a transcriptional regulator. Binds to the TERT promoter and represses telomerase expression. Plays a role in TGFB1-mediated inhibition of cell-proliferation, possibly regulating SMAD3 transcriptional activity. Represses JUND-mediated transcriptional activation on AP1 sites, as well as that mediated by NFKB subunit RELA. Positively regulates HOXC8 and HOXC6 gene expression. May be involved in normal hematopoiesis through the activation of HOXA9 expression. May be involved in DNA repair. In Homo sapiens (Human), this protein is Menin (MEN1).